Consider the following 142-residue polypeptide: Small ribosomal subunit protein uS8c (142 aa).

Belongs to the universal ribosomal protein uS8 family. In terms of assembly, part of the 30S ribosomal subunit.

Its subcellular location is the plastid. Its function is as follows. One of the primary rRNA binding proteins, it binds directly to 16S rRNA central domain where it helps coordinate assembly of the platform of the 30S subunit. The sequence is that of Small ribosomal subunit protein uS8c (rps8) from Euglena longa (Euglenophycean alga).